The following is a 119-amino-acid chain: Large ribosomal subunit protein uL18 (119 aa).

It belongs to the universal ribosomal protein uL18 family. In terms of assembly, part of the 50S ribosomal subunit; part of the 5S rRNA/L5/L18/L25 subcomplex. Contacts the 5S and 23S rRNAs.

Its function is as follows. This is one of the proteins that bind and probably mediate the attachment of the 5S RNA into the large ribosomal subunit, where it forms part of the central protuberance. This chain is Large ribosomal subunit protein uL18, found in Clostridium perfringens (strain 13 / Type A).